A 305-amino-acid chain; its full sequence is Carbonic anhydrase 5A, mitochondrial (305 aa).

The transit peptide at 1-38 directs the protein to the mitochondrion; sequence MLGRNTWKTSAFSFLVEQMWAPLWSRSMRPGRWCSQRS. The Alpha-carbonic anhydrase domain occupies 39 to 296; the sequence is CAWQTSNNTL…LMNRKVWASF (258 aa). Positions 130, 132, and 155 each coordinate Zn(2+).

This sequence belongs to the alpha-carbonic anhydrase family. Requires Zn(2+) as cofactor.

It is found in the mitochondrion. The catalysed reaction is hydrogencarbonate + H(+) = CO2 + H2O. With respect to regulation, activated by L- and D-histidine. Activated by L- and D-phenylalanine. Activated by L-adrenaline. Inhibited by coumarins, sulfonamide derivatives such as acetazolamide and Foscarnet (phosphonoformate trisodium salt). Activated by histamine. Functionally, mitochondrial carbonic anhydrase that catalyzes the reversible conversion of carbon dioxide to bicarbonate/HCO3. Mitochondria are impermeable to HCO3, and thus this intramitochondrial carbonic anhydrase is pivotal in providing HCO3 for multiple mitochondrial enzymes that catalyze the formation of essential metabolites of intermediary metabolism in the urea and Krebs cycles. The chain is Carbonic anhydrase 5A, mitochondrial from Homo sapiens (Human).